Reading from the N-terminus, the 244-residue chain is Thiol S-methyltransferase TMT1A (244 aa).

The tract at residues 1-28 (MELTIFILRLAIYILTFPLYLLNFLGLW) is targeting to lipid droplets. An N-terminal signal peptide occupies residues 1–29 (MELTIFILRLAIYILTFPLYLLNFLGLWS).

Belongs to the methyltransferase superfamily. As to quaternary structure, (Microbial infection) Interacts with HCV non-structural protein 4B/NS4B (via C-terminal region); this interaction may promote the recruitment of NS4B in the proximity of lipid droplet. In terms of assembly, self-associates. Interacts with SNRNP200; this interaction may promote the odontogenic differentiation. In terms of processing, methylated at lysine residues most likely by EZH2. As to expression, expressed in the liver.

The protein localises to the lipid droplet. The protein resides in the endoplasmic reticulum. Its subcellular location is the membrane. It localises to the microsome. It is found in the cytoplasm. The protein localises to the cytosol. It catalyses the reaction a thiol + S-adenosyl-L-methionine = a methyl thioether + S-adenosyl-L-homocysteine + H(+). The enzyme catalyses an adenosine in mRNA + S-adenosyl-L-methionine = an N(6)-methyladenosine in mRNA + S-adenosyl-L-homocysteine + H(+). With respect to regulation, inhibited by 2,3-dichloro-alpha-methylbenzylamine (DCMB). In terms of biological role, thiol S-methyltransferase that catalyzes the transfer of a methyl group from S-adenosyl-L-methionine to alkyl and phenolic thiol-containing acceptor substrates. Together with TMT1B accounts for most of S-thiol methylation activity in the endoplasmic reticulum of hepatocytes. Able to methylate the N6 position of adenosine residues in long non-coding RNAs (lncRNAs). May facilitate lncRNAs transfer into exosomes at the tumor-stroma interface. Promotes osteogenic and odontogenic differentiation by regulating the expression of genes involved in stem cell differentiation and survival. Targeted from the endoplasmic reticulum to lipid droplets, where it recruits cellular proteins to form functional organelles. Functionally, (Microbial infection) May be involved in the assembly and release stages of hepatitis C virus (HCV) life cycle and thus play a crucial role in HCV propagation. The protein is Thiol S-methyltransferase TMT1A of Homo sapiens (Human).